The primary structure comprises 438 residues: Lipid-A-disaccharide synthase (438 aa).

This sequence belongs to the LpxB family.

The catalysed reaction is a lipid X + a UDP-2-N,3-O-bis[(3R)-3-hydroxyacyl]-alpha-D-glucosamine = a lipid A disaccharide + UDP + H(+). It functions in the pathway bacterial outer membrane biogenesis; LPS lipid A biosynthesis. In terms of biological role, condensation of UDP-2,3-diacylglucosamine and 2,3-diacylglucosamine-1-phosphate to form lipid A disaccharide, a precursor of lipid A, a phosphorylated glycolipid that anchors the lipopolysaccharide to the outer membrane of the cell. This is Lipid-A-disaccharide synthase from Xanthomonas campestris pv. campestris (strain 8004).